Consider the following 750-residue polypeptide: Methylmalonyl-CoA mutase, mitochondrial (750 aa).

The transit peptide at 1–32 directs the protein to the mitochondrion; the sequence is MLRVKNQLFLLSPHYLKQVKESSGSRLIRQRF. Residue Gln50 coordinates malonyl-CoA. Position 89 is an N6-acetyllysine (Lys89). Malonyl-CoA is bound by residues 96–99 and 106–110; these read YPTM and TIRQY. Lys212 bears the N6-acetyllysine mark. Malonyl-CoA contacts are provided by residues 216-218, Arg228, Lys255, His265, and 304-306; these read TIQ and RLS. N6-acetyllysine is present on Lys335. Lys343 is modified (N6-succinyllysine). Phosphoserine is present on Ser481. Lys595 is modified (N6-succinyllysine). Lys602 is modified (N6-acetyllysine). The region spanning 614-746 is the B12-binding domain; it reads RPRLLVAKMG…DDIEKCLEKK (133 aa). His627 is an adenosylcob(III)alamin binding site.

Belongs to the methylmalonyl-CoA mutase family. In terms of assembly, homodimer. Interacts (the apoenzyme form) with MMAA; the interaction is GTP dependent. It depends on adenosylcob(III)alamin as a cofactor.

It is found in the mitochondrion matrix. The protein localises to the mitochondrion. Its subcellular location is the cytoplasm. It carries out the reaction (R)-methylmalonyl-CoA = succinyl-CoA. Its activity is regulated as follows. Inhibited by itaconyl-CoA, a metabolite that inactivates the coenzyme B12 cofactor. Its function is as follows. Catalyzes the reversible isomerization of methylmalonyl-CoA (MMCoA) (generated from branched-chain amino acid metabolism and degradation of dietary odd chain fatty acids and cholesterol) to succinyl-CoA (3-carboxypropionyl-CoA), a key intermediate of the tricarboxylic acid cycle. The chain is Methylmalonyl-CoA mutase, mitochondrial (MMUT) from Macaca fascicularis (Crab-eating macaque).